Reading from the N-terminus, the 114-residue chain is T cell receptor beta variable 6-1 (114 aa).

The signal sequence occupies residues 1–21 (MSIGLLCCVAFSLLWASPVNA). Positions 22 to 114 (GVTQTPKFQV…TSVYFCASSE (93 aa)) constitute an Ig-like domain. Cysteine 42 and cysteine 110 are oxidised to a cystine. Asparagine 84 carries N-linked (GlcNAc...) asparagine glycosylation.

In terms of assembly, alpha-beta TR is a heterodimer composed of an alpha and beta chain; disulfide-linked. The alpha-beta TR is associated with the transmembrane signaling CD3 coreceptor proteins to form the TR-CD3 (TcR or TCR). The assembly of alpha-beta TR heterodimers with CD3 occurs in the endoplasmic reticulum where a single alpha-beta TR heterodimer associates with one CD3D-CD3E heterodimer, one CD3G-CD3E heterodimer and one CD247 homodimer forming a stable octameric structure. CD3D-CD3E and CD3G-CD3E heterodimers preferentially associate with TR alpha and TR beta chains, respectively. The association of the CD247 homodimer is the last step of TcR assembly in the endoplasmic reticulum and is required for transport to the cell surface.

Its subcellular location is the cell membrane. In terms of biological role, v region of the variable domain of T cell receptor (TR) beta chain that participates in the antigen recognition. Alpha-beta T cell receptors are antigen specific receptors which are essential to the immune response and are present on the cell surface of T lymphocytes. Recognize peptide-major histocompatibility (MH) (pMH) complexes that are displayed by antigen presenting cells (APC), a prerequisite for efficient T cell adaptive immunity against pathogens. Binding of alpha-beta TR to pMH complex initiates TR-CD3 clustering on the cell surface and intracellular activation of LCK that phosphorylates the ITAM motifs of CD3G, CD3D, CD3E and CD247 enabling the recruitment of ZAP70. In turn ZAP70 phosphorylates LAT, which recruits numerous signaling molecules to form the LAT signalosome. The LAT signalosome propagates signal branching to three major signaling pathways, the calcium, the mitogen-activated protein kinase (MAPK) kinase and the nuclear factor NF-kappa-B (NF-kB) pathways, leading to the mobilization of transcription factors that are critical for gene expression and essential for T cell growth and differentiation. The T cell repertoire is generated in the thymus, by V-(D)-J rearrangement. This repertoire is then shaped by intrathymic selection events to generate a peripheral T cell pool of self-MH restricted, non-autoaggressive T cells. Post-thymic interaction of alpha-beta TR with the pMH complexes shapes TR structural and functional avidity. This Homo sapiens (Human) protein is T cell receptor beta variable 6-1.